The chain runs to 177 residues: Transcription factor E (177 aa).

One can recognise an HTH TFE/IIEalpha-type domain in the interval 9–91 (VEELLNELVG…YWRINYDKAL (83 aa)).

The protein belongs to the TFE family. In terms of assembly, monomer. Interaction with RNA polymerase subunits RpoF and RpoE is necessary for Tfe stimulatory transcription activity. Able to interact with Tbp and RNA polymerase in the absence of DNA promoter. Interacts both with the preinitiation and elongation complexes.

Its function is as follows. Transcription factor that plays a role in the activation of archaeal genes transcribed by RNA polymerase. Facilitates transcription initiation by enhancing TATA-box recognition by TATA-box-binding protein (Tbp), and transcription factor B (Tfb) and RNA polymerase recruitment. Not absolutely required for transcription in vitro, but particularly important in cases where Tbp or Tfb function is not optimal. It dynamically alters the nucleic acid-binding properties of RNA polymerases by stabilizing the initiation complex and destabilizing elongation complexes. Seems to translocate with the RNA polymerase following initiation and acts by binding to the non template strand of the transcription bubble in elongation complexes. The sequence is that of Transcription factor E from Archaeoglobus fulgidus (strain ATCC 49558 / DSM 4304 / JCM 9628 / NBRC 100126 / VC-16).